The sequence spans 181 residues: Lysozyme C (181 aa).

Residues 1 to 19 (MRIAFFLLILSIIVGLAYG) form the signal peptide. A propeptide spanning residues 139-181 (LTDSRPLGPFNVTEEEMDQLFIDHEIAMAQCEAEKTCNGFDLE) is cleaved from the precursor.

It belongs to the dictyostelium lysozyme family. Post-translationally, contains six disulfide bonds.

Its subcellular location is the cytoplasmic vesicle lumen. It catalyses the reaction Hydrolysis of (1-&gt;4)-beta-linkages between N-acetylmuramic acid and N-acetyl-D-glucosamine residues in a peptidoglycan and between N-acetyl-D-glucosamine residues in chitodextrins.. Its function is as follows. Has antibacterial activity. The sequence is that of Lysozyme C (alyC) from Dictyostelium discoideum (Social amoeba).